Reading from the N-terminus, the 76-residue chain is Small proline-rich protein 4 (76 aa).

The interval 38–76 (PKTKDPCVPQAKKQCPARSTTNPAQEKCPAQQDPKCKQK) is disordered.

The protein belongs to the cornifin (SPRR) family. Post-translationally, cross-linked to membrane proteins by transglutaminase.

It localises to the cytoplasm. The protein resides in the cell cortex. Functionally, cross-linked envelope protein of keratinocytes. Involved in UV-induced cornification. This Mus musculus (Mouse) protein is Small proline-rich protein 4 (Sprr4).